The chain runs to 450 residues: UPF0210 protein MK1214 (450 aa).

The protein belongs to the UPF0210 family.

The protein is UPF0210 protein MK1214 of Methanopyrus kandleri (strain AV19 / DSM 6324 / JCM 9639 / NBRC 100938).